The sequence spans 391 residues: Multidrug resistance protein MdtL (391 aa).

Transmembrane regions (helical) follow at residues 4 to 24, 42 to 62, 69 to 89, 93 to 113, 134 to 154, 158 to 178, 203 to 222, 245 to 265, 269 to 289, 293 to 313, 331 to 351, and 356 to 376; these read FLIC…MYLV, IAFS…GKVA, PVAI…SLAE, LFLA…VVAF, GITC…MLNF, SLFW…LFIL, FFLS…LTFV, ALTA…LGIF, TLMI…AVSP, VSLF…GVAM, LGIA…VVGI, and MLIG…MFVA.

It belongs to the major facilitator superfamily. DHA1 family. MdtL (TC 2.A.1.2.22) subfamily.

The protein localises to the cell inner membrane. Confers resistance to chloramphenicol. This Escherichia coli O81 (strain ED1a) protein is Multidrug resistance protein MdtL.